A 348-amino-acid polypeptide reads, in one-letter code: Alcohol dehydrogenase 2 (348 aa).

Ser2 bears the N-acetylserine mark. A Zn(2+)-binding site is contributed by Cys44. NAD(+) contacts are provided by His45, Thr46, and His49. The Zn(2+) site is built by His67, Glu68, Cys98, Cys101, Cys104, Cys112, and Cys154. NAD(+) contacts are provided by Gly181, Gly182, Leu183, Asp202, and Lys207. A Phosphoserine modification is found at Ser213. Residue Phe222 coordinates NAD(+). Residue Thr223 is modified to Phosphothreonine. Glycyl lysine isopeptide (Lys-Gly) (interchain with G-Cter in ubiquitin) cross-links involve residues Lys226 and Lys234. Val269 serves as a coordination point for NAD(+). Ser279 is modified (phosphoserine). Residue Lys287 forms a Glycyl lysine isopeptide (Lys-Gly) (interchain with G-Cter in ubiquitin) linkage. NAD(+) contacts are provided by Ser294 and Val296. The residue at position 316 (Ser316) is a Phosphoserine. Lys319 is covalently cross-linked (Glycyl lysine isopeptide (Lys-Gly) (interchain with G-Cter in ubiquitin)). Arg341 serves as a coordination point for NAD(+).

Belongs to the zinc-containing alcohol dehydrogenase family. As to quaternary structure, homotetramer. Zn(2+) is required as a cofactor.

Its subcellular location is the cytoplasm. It carries out the reaction a primary alcohol + NAD(+) = an aldehyde + NADH + H(+). The catalysed reaction is a secondary alcohol + NAD(+) = a ketone + NADH + H(+). It catalyses the reaction ethanol + NAD(+) = acetaldehyde + NADH + H(+). The enzyme catalyses butan-1-ol + NAD(+) = butanal + NADH + H(+). It carries out the reaction hexan-1-ol + NAD(+) = hexanal + NADH + H(+). Functionally, preferentially oxidative, glucose-repressed isozyme that catalyzes the conversion of ethanol to acetaldehyde. Main enzyme involved in ethanol consumption. Acts on a variety of primary unbranched aliphatic alcohols. Also produces ethanol from glucose, albeit less than ADH1. The protein is Alcohol dehydrogenase 2 (ADH2) of Saccharomyces cerevisiae (strain ATCC 204508 / S288c) (Baker's yeast).